Here is a 532-residue protein sequence, read N- to C-terminus: Putative cysteine ligase BshC (532 aa).

Residues 431 to 451 (MAQAKDALAKVDASLVEAAER) adopt a coiled-coil conformation.

Belongs to the BshC family.

This chain is Putative cysteine ligase BshC, found in Koribacter versatilis (strain Ellin345).